The primary structure comprises 283 residues: Arsenite methyltransferase (283 aa).

The protein belongs to the methyltransferase superfamily. Arsenite methyltransferase family.

The catalysed reaction is arsenic triglutathione + [thioredoxin]-dithiol + S-adenosyl-L-methionine + 2 H2O = methylarsonous acid + [thioredoxin]-disulfide + 3 glutathione + S-adenosyl-L-homocysteine + H(+). It carries out the reaction arsenic triglutathione + 2 [thioredoxin]-dithiol + 2 S-adenosyl-L-methionine + H2O = dimethylarsinous acid + 2 [thioredoxin]-disulfide + 3 glutathione + 2 S-adenosyl-L-homocysteine + 2 H(+). It catalyses the reaction arsenic triglutathione + 3 [thioredoxin]-dithiol + 3 S-adenosyl-L-methionine = trimethylarsine + 3 [thioredoxin]-disulfide + 3 glutathione + 3 S-adenosyl-L-homocysteine + 3 H(+). In terms of biological role, catalyzes the transfer of a methyl group from AdoMet to arsenite, producing methylated arsenicals. Involved in the conversion of As(III) to a number of di- and trimethylated species, with trimethylarsine as the end product. Reduces the arsenic toxicity in the cell and may contribute to the global arsenic cycling. The chain is Arsenite methyltransferase from Rhodopseudomonas palustris (strain ATCC BAA-98 / CGA009).